An 84-amino-acid polypeptide reads, in one-letter code: Cell division topological specificity factor (84 aa).

It belongs to the MinE family.

In terms of biological role, prevents the cell division inhibition by proteins MinC and MinD at internal division sites while permitting inhibition at polar sites. This ensures cell division at the proper site by restricting the formation of a division septum at the midpoint of the long axis of the cell. This is Cell division topological specificity factor from Burkholderia multivorans (strain ATCC 17616 / 249).